A 487-amino-acid chain; its full sequence is N-succinylglutamate 5-semialdehyde dehydrogenase (487 aa).

An NAD(+)-binding site is contributed by 221–226 (GSSRTG). Catalysis depends on residues Glu244 and Cys278.

It belongs to the aldehyde dehydrogenase family. AstD subfamily.

It catalyses the reaction N-succinyl-L-glutamate 5-semialdehyde + NAD(+) + H2O = N-succinyl-L-glutamate + NADH + 2 H(+). Its pathway is amino-acid degradation; L-arginine degradation via AST pathway; L-glutamate and succinate from L-arginine: step 4/5. In terms of biological role, catalyzes the NAD-dependent reduction of succinylglutamate semialdehyde into succinylglutamate. The chain is N-succinylglutamate 5-semialdehyde dehydrogenase from Ectopseudomonas mendocina (strain ymp) (Pseudomonas mendocina).